Consider the following 222-residue polypeptide: ATP synthase F(0) complex subunit a (222 aa).

Transmembrane regions (helical) follow at residues 8 to 28, 64 to 84, 93 to 113, 127 to 147, 160 to 180, and 197 to 219; these read FFYV…ILLP, WSLM…LGLL, QLTV…VPGF, QGTP…SLLI, ITAG…LSSI, and ILEL…LYLH.

The protein belongs to the ATPase A chain family. Component of the ATP synthase complex composed at least of ATP5F1A/subunit alpha, ATP5F1B/subunit beta, ATP5MC1/subunit c (homooctomer), MT-ATP6/subunit a, MT-ATP8/subunit 8, ATP5ME/subunit e, ATP5MF/subunit f, ATP5MG/subunit g, ATP5MK/subunit k, ATP5MJ/subunit j, ATP5F1C/subunit gamma, ATP5F1D/subunit delta, ATP5F1E/subunit epsilon, ATP5PF/subunit F6, ATP5PB/subunit b, ATP5PD/subunit d, ATP5PO/subunit OSCP. ATP synthase complex consists of a soluble F(1) head domain (subunits alpha(3) and beta(3)) - the catalytic core - and a membrane F(0) domain - the membrane proton channel (subunits c, a, 8, e, f, g, k and j). These two domains are linked by a central stalk (subunits gamma, delta, and epsilon) rotating inside the F1 region and a stationary peripheral stalk (subunits F6, b, d, and OSCP). Interacts with DNAJC30; interaction is direct.

It localises to the mitochondrion inner membrane. The catalysed reaction is H(+)(in) = H(+)(out). Its function is as follows. Subunit a, of the mitochondrial membrane ATP synthase complex (F(1)F(0) ATP synthase or Complex V) that produces ATP from ADP in the presence of a proton gradient across the membrane which is generated by electron transport complexes of the respiratory chain. ATP synthase complex consist of a soluble F(1) head domain - the catalytic core - and a membrane F(1) domain - the membrane proton channel. These two domains are linked by a central stalk rotating inside the F(1) region and a stationary peripheral stalk. During catalysis, ATP synthesis in the catalytic domain of F(1) is coupled via a rotary mechanism of the central stalk subunits to proton translocation. With the subunit c (ATP5MC1), forms the proton-conducting channel in the F(0) domain, that contains two crucial half-channels (inlet and outlet) that facilitate proton movement from the mitochondrial intermembrane space (IMS) into the matrix. Protons are taken up via the inlet half-channel and released through the outlet half-channel, following a Grotthuss mechanism. In Loxodonta africana (African elephant), this protein is ATP synthase F(0) complex subunit a.